A 213-amino-acid chain; its full sequence is Methylthioribulose-1-phosphate dehydratase (213 aa).

Zn(2+) contacts are provided by His104 and His106.

It belongs to the aldolase class II family. MtnB subfamily. Zn(2+) is required as a cofactor.

It carries out the reaction 5-(methylsulfanyl)-D-ribulose 1-phosphate = 5-methylsulfanyl-2,3-dioxopentyl phosphate + H2O. It functions in the pathway amino-acid biosynthesis; L-methionine biosynthesis via salvage pathway; L-methionine from S-methyl-5-thio-alpha-D-ribose 1-phosphate: step 2/6. In terms of biological role, catalyzes the dehydration of methylthioribulose-1-phosphate (MTRu-1-P) into 2,3-diketo-5-methylthiopentyl-1-phosphate (DK-MTP-1-P). The polypeptide is Methylthioribulose-1-phosphate dehydratase (Stenotrophomonas maltophilia (strain R551-3)).